Here is a 486-residue protein sequence, read N- to C-terminus: Keratin-3, type I cytoskeletal 51 kDa (486 aa).

Positions 1–125 (MSNYSIKQSA…AGGMDIFSTN (125 aa)) are head. The segment at 126–161 (EKQTMQNLNDRLASYLDKVHALETANTELERKIKEW) is coil 1A. Positions 126–442 (EKQTMQNLND…RLLDGDLSKP (317 aa)) constitute an IF rod domain. The segment at 162–184 (YEKQRPGSSSGDGAKDYSKYYTM) is linker 1. A coil 1B region spans residues 185–276 (INDLKNQIIA…KNHEDELKGM (92 aa)). Residues 277-299 (QVTQVGQVNVEMNAAPSSDLTKI) form a linker 12 region. Positions 300–438 (LNDMRSQYED…ETYRRLLDGD (139 aa)) are coil 2. The interval 435-466 (LDGDLSKPKSGGGTSTNTGSTSSKGSTRTVKR) is disordered. The segment at 439 to 486 (LSKPKSGGGTSTNTGSTSSKGSTRTVKRREIIEEVVDGKVVSTKVVDM) is tail. The segment covering 449 to 461 (STNTGSTSSKGST) has biased composition (low complexity).

This sequence belongs to the intermediate filament family. As to quaternary structure, heterotetramer of two type I and two type II keratins.

The sequence is that of Keratin-3, type I cytoskeletal 51 kDa from Xenopus laevis (African clawed frog).